The primary structure comprises 490 residues: Ribulose bisphosphate carboxylase large chain (490 aa).

Asparagine 127 and threonine 177 together coordinate substrate. Residue lysine 179 is the Proton acceptor of the active site. Lysine 181 serves as a coordination point for substrate. Mg(2+)-binding residues include lysine 205, aspartate 207, and glutamate 208. Lysine 205 bears the N6-carboxylysine mark. Catalysis depends on histidine 297, which acts as the Proton acceptor. 3 residues coordinate substrate: arginine 298, histidine 330, and serine 382.

This sequence belongs to the RuBisCO large chain family. Type I subfamily. Heterohexadecamer of 8 large chains and 8 small chains. Mg(2+) serves as cofactor.

It localises to the plastid. The protein localises to the chloroplast. It catalyses the reaction 2 (2R)-3-phosphoglycerate + 2 H(+) = D-ribulose 1,5-bisphosphate + CO2 + H2O. It carries out the reaction D-ribulose 1,5-bisphosphate + O2 = 2-phosphoglycolate + (2R)-3-phosphoglycerate + 2 H(+). In terms of biological role, ruBisCO catalyzes two reactions: the carboxylation of D-ribulose 1,5-bisphosphate, the primary event in carbon dioxide fixation, as well as the oxidative fragmentation of the pentose substrate in the photorespiration process. Both reactions occur simultaneously and in competition at the same active site. The sequence is that of Ribulose bisphosphate carboxylase large chain from Detonula confervacea (Marine diatom).